The primary structure comprises 137 residues: Proofreading thioesterase EntH (137 aa).

Residue Glu-63 is the Nucleophile or proton acceptor of the active site.

It belongs to the thioesterase PaaI family. Homotetramer. Dimer of dimers. Interacts specifically with the aryl carrier protein (ArCP) domain of EntB.

Its subcellular location is the cytoplasm. It functions in the pathway siderophore biosynthesis; enterobactin biosynthesis. Its function is as follows. Required for optimal enterobactin synthesis. Acts as a proofreading enzyme that prevents EntB misacylation by hydrolyzing the thioester bound existing between EntB and wrongly charged molecules. The chain is Proofreading thioesterase EntH from Citrobacter koseri (strain ATCC BAA-895 / CDC 4225-83 / SGSC4696).